A 408-amino-acid polypeptide reads, in one-letter code: Succinylornithine transaminase (408 aa).

At K252 the chain carries N6-(pyridoxal phosphate)lysine.

The protein belongs to the class-III pyridoxal-phosphate-dependent aminotransferase family. AstC subfamily. Requires pyridoxal 5'-phosphate as cofactor.

The enzyme catalyses N(2)-succinyl-L-ornithine + 2-oxoglutarate = N-succinyl-L-glutamate 5-semialdehyde + L-glutamate. The protein operates within amino-acid degradation; L-arginine degradation via AST pathway; L-glutamate and succinate from L-arginine: step 3/5. In terms of biological role, catalyzes the transamination of N(2)-succinylornithine and alpha-ketoglutarate into N(2)-succinylglutamate semialdehyde and glutamate. Can also act as an acetylornithine aminotransferase. The chain is Succinylornithine transaminase from Salmonella paratyphi A (strain ATCC 9150 / SARB42).